Reading from the N-terminus, the 351-residue chain is N-formyl peptide receptor 2 (351 aa).

Residues 1-27 (METNFSTPLNEYEEVSYESAGYTVLRI) lie on the Extracellular side of the membrane. Asn4 is a glycosylation site (N-linked (GlcNAc...) asparagine). The chain crosses the membrane as a helical span at residues 28–50 (LPLVVLGVTFVLGVLGNGLVIWV). The Cytoplasmic portion of the chain corresponds to 51-61 (AGFRMTRTVTT). A helical transmembrane segment spans residues 62 to 83 (ICYLNLALADFSFTATLPFLIV). Topologically, residues 84–100 (SMAMGEKWPFGWFLCKL) are extracellular. An intrachain disulfide couples Cys98 to Cys176. The chain crosses the membrane as a helical span at residues 101–121 (IHIVVDINLFGSVFLIGFIAL). Residues 122–140 (DRCICVLHPVWAQNHRTVS) lie on the Cytoplasmic side of the membrane. Residues 141-162 (LAMKVIVGPWILALVLTLPVFL) form a helical membrane-spanning segment. Residues 163 to 205 (FLTTVTIPNGDTYCTFNFASWGGTPEERLKVAITMLTARGIIR) are Extracellular-facing. A helical transmembrane segment spans residues 206–226 (FVIGFSLPMSIVAICYGLIAA). Over 227 to 242 (KIHKKGMIKSSRPLRV) the chain is Cytoplasmic. Residues 243–266 (LTAVVASFFICWFPFQLVALLGTV) traverse the membrane as a helical segment. Residues 267-286 (WLKEMLFYGKYKIIDILVNP) lie on the Extracellular side of the membrane. A helical membrane pass occupies residues 287 to 306 (TSSLAFFNSCLNPMLYVFVG). Residues 307–351 (QDFRERLIHSLPTSLERALSEDSAPTNDTAANSASPPAETELQAM) are Cytoplasmic-facing. Positions 325-351 (LSEDSAPTNDTAANSASPPAETELQAM) are disordered. Residues 329–341 (SAPTNDTAANSAS) show a composition bias toward polar residues.

It belongs to the G-protein coupled receptor 1 family. In terms of assembly, interacts with Amyloid-beta protein 42, product of APP; the interaction takes place at the cell surface and the complex is then rapidly internalized. As to quaternary structure, (Microbial infection) Interacts with Staphylococcus aureus protein SSL13; this interaction leads to the activation of neutrophils. In terms of tissue distribution, detected in lung, bone marrow, neutrophils, spleen and testis.

It localises to the cell membrane. In terms of biological role, low affinity receptor for N-formyl-methionyl peptides, which are powerful neutrophil chemotactic factors. Binding of FMLP to the receptor causes activation of neutrophils. This response is mediated via a G-protein that activates a phosphatidylinositol-calcium second messenger system. The activation of LXA4R could result in an anti-inflammatory outcome counteracting the actions of pro-inflammatory signals such as LTB4 (leukotriene B4). Receptor for the chemokine-like protein FAM19A5, mediating FAM19A5-stimulated macrophage chemotaxis and the inhibitory effect on TNFSF11/RANKL-induced osteoclast differentiation. Acts as a receptor for humanin. The chain is N-formyl peptide receptor 2 (FPR2) from Homo sapiens (Human).